The sequence spans 238 residues: Neuromodulin (238 aa).

Positions 1 to 238 (MLCCMRRTKQ…EEPEADQEHA (238 aa)) are disordered. S-palmitoyl cysteine attachment occurs at residues Cys3 and Cys4. Over residues 9 to 32 (KQVEKNDEDQKIEQDGIKPEDKAH) the composition is skewed to basic and acidic residues. Residues 31–60 (AHKAATKIQASFRGHITRKKLKGEKKDDAQ) enclose the IQ domain. At Ser41 the chain carries Phosphoserine; by PHK and PKC. The segment covering 54 to 83 (EKKDDAQAAEAEANKKDEAPVADGVEKKGE) has biased composition (basic and acidic residues). Residues 84–95 (GTTATEAAPATG) are compositionally biased toward low complexity. A compositionally biased stretch (basic and acidic residues) spans 97-116 (KPDEPGKAGETPSEEKKGEG). Low complexity predominate over residues 119–130 (ATEQAAPQAPAS). A compositionally biased stretch (polar residues) spans 139–154 (ETESATKASTDNSPSS). Phosphoserine occurs at positions 151, 153, and 154. Residues 155-167 (KAEDAPAKEEPKQ) show a composition bias toward basic and acidic residues. Residues 168 to 199 (ADVPAAVTAAAATTPAAEDAAAKATAQPPTET) are compositionally biased toward low complexity. Thr181 is modified (phosphothreonine). Residues Ser202 and Ser203 each carry the phosphoserine; by CK2 modification. The span at 213–225 (DETKPKESARQDE) shows a compositional bias: basic and acidic residues. Over residues 226–238 (GKEEEPEADQEHA) the composition is skewed to acidic residues.

Belongs to the neuromodulin family. In terms of assembly, identified in a complex containing FGFR4, NCAM1, CDH2, PLCG1, FRS2, SRC, SHC1, GAP43 and CTTN. Interacts (via IQ domain) with calmodulin. Binds calmodulin with a greater affinity in the absence of Ca(2+) than in its presence. Phosphorylated. Phosphorylation of this protein by a protein kinase C is specifically correlated with certain forms of synaptic plasticity. In terms of processing, palmitoylated by ZDHHC3. Palmitoylation is regulated by ARF6 and is essential for plasma membrane association and axonal and dendritic filopodia induction. Deacylated by LYPLA2.

Its subcellular location is the cell membrane. It localises to the cell projection. The protein resides in the growth cone membrane. It is found in the synapse. The protein localises to the filopodium membrane. Its subcellular location is the perikaryon. It localises to the dendrite. The protein resides in the axon. It is found in the cytoplasm. In terms of biological role, this protein is associated with nerve growth. It is a major component of the motile 'growth cones' that form the tips of elongating axons. Plays a role in axonal and dendritic filopodia induction. This chain is Neuromodulin (GAP43), found in Macaca fascicularis (Crab-eating macaque).